A 353-amino-acid chain; its full sequence is B1 bradykinin receptor (353 aa).

Topologically, residues M1 to T41 are extracellular. N-linked (GlcNAc...) asparagine glycosylation is found at N13 and N21. A helical transmembrane segment spans residues C42 to L62. Over V63–E72 the chain is Cytoplasmic. A helical transmembrane segment spans residues I73–A93. The Extracellular segment spans residues E94–R110. The cysteines at positions 109 and 189 are disulfide-linked. A helical transmembrane segment spans residues V111–S131. Residues R132 to A154 lie on the Cytoplasmic side of the membrane. Residues Q155 to L175 traverse the membrane as a helical segment. The Extracellular portion of the chain corresponds to R176 to N207. N185 carries N-linked (GlcNAc...) asparagine glycosylation. A helical membrane pass occupies residues V208–A228. At L229–L251 the chain is on the cytoplasmic side. A helical transmembrane segment spans residues I252–L272. Residues E273 to Q295 lie on the Extracellular side of the membrane. The chain crosses the membrane as a helical span at residues Y296–G316. Over Q317–N353 the chain is Cytoplasmic. C330 carries the S-palmitoyl cysteine lipid modification.

The protein belongs to the G-protein coupled receptor 1 family. Bradykinin receptor subfamily. BDKRB1 sub-subfamily.

The protein resides in the cell membrane. In terms of biological role, this is a receptor for bradykinin. Could be a factor in chronic pain and inflammation. The chain is B1 bradykinin receptor (BDKRB1) from Sus scrofa (Pig).